The primary structure comprises 512 residues: ATP synthase subunit alpha (512 aa).

169–176 (GDRQTGKT) serves as a coordination point for ATP.

This sequence belongs to the ATPase alpha/beta chains family. In terms of assembly, F-type ATPases have 2 components, CF(1) - the catalytic core - and CF(0) - the membrane proton channel. CF(1) has five subunits: alpha(3), beta(3), gamma(1), delta(1), epsilon(1). CF(0) has three main subunits: a(1), b(2) and c(9-12). The alpha and beta chains form an alternating ring which encloses part of the gamma chain. CF(1) is attached to CF(0) by a central stalk formed by the gamma and epsilon chains, while a peripheral stalk is formed by the delta and b chains.

Its subcellular location is the cell inner membrane. The enzyme catalyses ATP + H2O + 4 H(+)(in) = ADP + phosphate + 5 H(+)(out). Produces ATP from ADP in the presence of a proton gradient across the membrane. The alpha chain is a regulatory subunit. This is ATP synthase subunit alpha from Dechloromonas aromatica (strain RCB).